Reading from the N-terminus, the 1218-residue chain is NACHT, LRR and PYD domains-containing protein 1a allele 3 (1218 aa).

Residues 1-29 are compositionally biased toward polar residues; sequence MGESQSKQESNTRVAQHGSQQDVDPTFQT. Disordered stretches follow at residues 1 to 44 and 71 to 91; these read MGES…QVEQ and EMDH…DRSE. A compositionally biased stretch (basic residues) spans 77–87; sequence RRHSHQSKKKL. In terms of domain architecture, NACHT spans 175–484; sequence QLVIIEGAAG…EFFAAMSYIL (310 aa). 181-188 contributes to the ATP binding site; that stretch reads GAAGIGKS. LRR repeat units lie at residues 343-364, 673-693, and 730-750; these read KERN…LTLC, NLEE…RSLC, and RLAE…RQLC. Residues 799–815 are compositionally biased toward polar residues; the sequence is TMPTENTDGEESLTSSK. Positions 799–842 are disordered; sequence TMPTENTDGEESLTSSKQQQQQSGDKHMEPLGTDDDFWGPSGPV. Residues 835 to 968 are ZU5; that stretch reads FWGPSGPVST…HFAVLENPSF (134 aa). One can recognise an FIIND domain in the interval 835–1118; sequence FWGPSGPVST…LRPALPRMAS (284 aa). The interval 969–1118 is UPA; the sequence is SPMGVLLRMI…LRPALPRMAS (150 aa). The 90-residue stretch at 1122–1211 folds into the CARD domain; the sequence is DAPALLHFVD…HLIMDLLEKS (90 aa).

The protein belongs to the NLRP family. As to quaternary structure, interacts (via LRR repeats) with BCL2 and BCL2L1 (via the loop between motifs BH4 and BH3). Interacts with NOD2; this interaction is enhanced in the presence of muramyl dipeptide (MDP) and increases IL1B release. Interacts with EIF2AK2/PKR; this interaction requires EIF2AK2 activity, is accompanied by EIF2AK2 autophosphorylation and promotes inflammasome assembly in response to danger-associated signals. Interacts with MEFV; this interaction targets Nlrp1a to degradation by autophagy, hence preventing excessive IL1B- and IL18-mediated inflammation. Interacts with DPP9; leading to inhibit activation of the inflammasome. DPP9 acts via formation of a ternary complex, composed of a DPP9 homodimer, one full-length NLRP1 protein, and one cleaved C-terminus of Nlrp1a (NACHT, LRR and PYD domains-containing protein 1a, C-terminus). Interacts with DPP8; leading to inhibit activation of the inflammasome, probably via formation of a ternary complex with DPP8. Interacts with the C-terminal part of Nlrp1a (NACHT, LRR and PYD domains-containing protein 1a, C-terminus) in absence of pathogens and other damage-associated signals. In terms of assembly, interacts with the N-terminal part of Nlrp1a (NACHT, LRR and PYD domains-containing protein 1a, N-terminus) in absence of pathogens and other damage-associated signals. Homomultimer; forms the Nlrp1a inflammasome polymeric complex, a filament composed of homopolymers of this form in response to pathogens and other damage-associated signals. The Nlrp1a inflammasome polymeric complex directly recruits pro-caspase-1 (proCASP1) independently of PYCARD/ASC. Interacts (via CARD domain) with CASP1 (via CARD domain); leading to CASP1 activation. Post-translationally, autocatalytically cleaved. Autocatalytic cleavage in FIIND region occurs constitutively, prior to activation signals, and is required for inflammasome activity (IL1B release), possibly by facilitating CASP1 binding. Both N- and C-terminal parts remain associated non-covalently. In terms of processing, ubiquitinated in response to pathogen-associated signals, leading to its degradation by the proteasome and subsequent release of the cleaved C-terminal part of the protein (NACHT, LRR and PYD domains-containing protein 1a, C-terminus), which polymerizes and forms the Nlrp1a inflammasome.

It is found in the cytoplasm. It localises to the cytosol. Its subcellular location is the nucleus. The protein resides in the inflammasome. With respect to regulation, activated by pathogens and other damage-associated signals: activation promotes ubiquitination and degradation of the N-terminal part, releasing the cleaved C-terminal part of the protein (NACHT, LRR and PYD domains-containing protein 1a, C-terminus), which polymerizes and forms the Nlrp1a inflammasome. Nlrp1a inflammasome is inhibited by DPP8 and DPP9, which sequester the C-terminal fragment of Nlrp1a (NACHT, LRR and PYD domains-containing protein 1a, C-terminus) in a ternary complex, thereby preventing Nlrp1a oligomerization and activation. Nlrp1a inflammasome is strongly activated by Val-boroPro (Talabostat, PT-100), an inhibitor of dipeptidyl peptidases DPP8 and DPP9. Val-boroPro relieves inhibition of DPP8 and/or DPP9 by promoting disruption of the ternary complex, releasing its C-terminal part from autoinhibition. Not activated by cleavage by B.anthracis lethal toxin (LT) endopeptidase. Its function is as follows. Acts as the sensor component of the Nlrp1a inflammasome, which mediates inflammasome activation in response to various pathogen-associated signals, leading to subsequent pyroptosis. Inflammasomes are supramolecular complexes that assemble in the cytosol in response to pathogens and other damage-associated signals and play critical roles in innate immunity and inflammation. Acts as a recognition receptor (PRR): recognizes specific pathogens and other damage-associated signals, such as Val-boroPro inhibitor, and mediates the formation of the inflammasome polymeric complex. In response to pathogen-associated signals, the N-terminal part of Nlrp1a is degraded by the proteasome, releasing the cleaved C-terminal part of the protein (NACHT, LRR and PYD domains-containing protein 1a, C-terminus), which polymerizes to initiate the formation of the inflammasome complex: the inflammasome directly recruits pro-caspase-1 (proCASP1) independently of PYCARD/ASC and promotes caspase-1 (CASP1) activation, which subsequently cleaves and activates inflammatory cytokines IL1B and IL18 and gasdermin-D (GSDMD), leading to pyroptosis. In the absence of GSDMD expression, the Nlrp1a inflammasome is able to recruit and activate CASP8, leading to activation of gasdermin-E (GSDME). In terms of biological role, constitutes the precursor of the Nlrp1a inflammasome, which mediates autoproteolytic processing within the FIIND domain to generate the N-terminal and C-terminal parts, which are associated non-covalently in absence of pathogens and other damage-associated signals. Functionally, regulatory part that prevents formation of the Nlrp1a inflammasome: in absence of pathogens and other damage-associated signals, interacts with the C-terminal part of Nlrp1a (NACHT, LRR and PYD domains-containing protein 1a, C-terminus), preventing activation of the Nlrp1a inflammasome. In response to pathogen-associated signals, this part is ubiquitinated by the N-end rule pathway and degraded by the proteasome, releasing the cleaved C-terminal part of the protein, which polymerizes and forms the Nlrp1a inflammasome. Constitutes the active part of the Nlrp1a inflammasome. In absence of pathogens and other damage-associated signals, interacts with the N-terminal part of Nlrp1a (NACHT, LRR and PYD domains-containing protein 1a, N-terminus), preventing activation of the Nlrp1a inflammasome. In response to pathogen-associated signals, the N-terminal part of Nlrp1a is degraded by the proteasome, releasing this form, which polymerizes to form the Nlrp1a inflammasome complex: the Nlrp1a inflammasome complex then directly recruits pro-caspase-1 (proCASP1) and promotes caspase-1 (CASP1) activation, leading to gasdermin-D (GSDMD) cleavage and subsequent pyroptosis. The sequence is that of NACHT, LRR and PYD domains-containing protein 1a allele 3 from Rattus norvegicus (Rat).